We begin with the raw amino-acid sequence, 135 residues long: Succinate dehydrogenase assembly factor 3, mitochondrial (135 aa).

Residues 73–101 (KENSNNNDNYNNNNNDNNNDNNNFINIGQ) are disordered. Low complexity predominate over residues 75–95 (NSNNNDNYNNNNNDNNNDNNN).

It belongs to the complex I LYR family. SDHAF3 subfamily. Interacts with the iron-sulfur protein subunit within the SDH catalytic dimer.

It localises to the mitochondrion matrix. Functionally, plays an essential role in the assembly of succinate dehydrogenase (SDH), an enzyme complex (also referred to as respiratory complex II) that is a component of both the tricarboxylic acid (TCA) cycle and the mitochondrial electron transport chain, and which couples the oxidation of succinate to fumarate with the reduction of ubiquinone (coenzyme Q) to ubiquinol. Promotes maturation of the iron-sulfur protein subunit of the SDH catalytic dimer, protecting it from the deleterious effects of oxidants. May act together with SDHAF1. The protein is Succinate dehydrogenase assembly factor 3, mitochondrial (acn9) of Dictyostelium discoideum (Social amoeba).